A 99-amino-acid chain; its full sequence is Malonate decarboxylase acyl carrier protein (99 aa).

S25 carries the O-(phosphoribosyl dephospho-coenzyme A)serine modification.

It belongs to the MdcC family. In terms of processing, covalently binds the prosthetic group of malonate decarboxylase.

It localises to the cytoplasm. Functionally, subunit of malonate decarboxylase, it is an acyl carrier protein to which acetyl and malonyl thioester residues are bound via a 2'-(5''-phosphoribosyl)-3'-dephospho-CoA prosthetic group and turn over during the catalytic mechanism. The chain is Malonate decarboxylase acyl carrier protein from Pseudomonas fluorescens (strain ATCC BAA-477 / NRRL B-23932 / Pf-5).